We begin with the raw amino-acid sequence, 70 residues long: MAHPKAAEVRKLTDADITEQIDGIRRELFDLRFQQATRQLSNTHRFKESRTKLAQLLTVQKERSRSAAAS.

This sequence belongs to the universal ribosomal protein uL29 family.

This Prochlorococcus marinus (strain MIT 9303) protein is Large ribosomal subunit protein uL29.